Consider the following 804-residue polypeptide: Type 2 DNA topoisomerase 6 subunit B (804 aa).

Residues Asn58, Asp89, 110 to 111, 120 to 127, and Lys629 each bind ATP; these read SR and GQQGIGIS.

Belongs to the TOP6B family. Homodimer. Heterotetramer of two Top6A and two Top6B chains.

The catalysed reaction is ATP-dependent breakage, passage and rejoining of double-stranded DNA.. In terms of biological role, relaxes both positive and negative superturns and exhibits a strong decatenase activity. In Halobacterium salinarum (strain ATCC 29341 / DSM 671 / R1), this protein is Type 2 DNA topoisomerase 6 subunit B.